Consider the following 230-residue polypeptide: MKLMEVSPLFPCIFLRRVNRFVGLVRIKERIERALITNTGRLNEFMIPGRIGYCTPKAGGKTRYILLGFEDHGKIAIIDTRLQGKAFEKIIEKELLPELEGCRIIKREPRVGESRLDYLLECSKGEIFVETKSAVLREGEYAMYPDCPSVRGQRHIKELIKLARDGKRAMIVFIGALPNVSKFKPYKKGDPKIAELLKEALEAGVEIRALGLHMELSGEIIYRGELGVEI.

It belongs to the SfsA family.

This is Sugar fermentation stimulation protein homolog from Pyrococcus furiosus (strain ATCC 43587 / DSM 3638 / JCM 8422 / Vc1).